Reading from the N-terminus, the 183-residue chain is Ribulose bisphosphate carboxylase small subunit, chloroplastic 1 (183 aa).

The transit peptide at 1 to 58 (MASSMLSNAAMATTAATAGAQASMVAPFNGLKSFATFPITKKSSNDFSSLPSNGGRVQ) directs the protein to the chloroplast.

The protein belongs to the RuBisCO small chain family. Heterohexadecamer of 8 large and 8 small subunits.

The protein resides in the plastid. Its subcellular location is the chloroplast. In terms of biological role, ruBisCO catalyzes two reactions: the carboxylation of D-ribulose 1,5-bisphosphate, the primary event in carbon dioxide fixation, as well as the oxidative fragmentation of the pentose substrate. Both reactions occur simultaneously and in competition at the same active site. Although the small subunit is not catalytic it is essential for maximal activity. This is Ribulose bisphosphate carboxylase small subunit, chloroplastic 1 from Amaranthus hypochondriacus (Prince-of-Wales feather).